The chain runs to 338 residues: Probable tRNA pseudouridine synthase B (338 aa).

Asp78 serves as the catalytic Nucleophile. One can recognise a PUA domain in the interval Leu245 to Met320.

It belongs to the pseudouridine synthase TruB family. Type 2 subfamily.

The catalysed reaction is uridine(55) in tRNA = pseudouridine(55) in tRNA. In terms of biological role, could be responsible for synthesis of pseudouridine from uracil-55 in the psi GC loop of transfer RNAs. This Methanosarcina mazei (strain ATCC BAA-159 / DSM 3647 / Goe1 / Go1 / JCM 11833 / OCM 88) (Methanosarcina frisia) protein is Probable tRNA pseudouridine synthase B.